The following is a 568-amino-acid chain: Urease subunit alpha (568 aa).

The Urease domain maps to 130–568; it reads GGIDTHIHFI…LPMAQRYFLF (439 aa). Residues His135, His137, and Lys218 each coordinate Ni(2+). Position 218 is an N6-carboxylysine (Lys218). His220 serves as a coordination point for substrate. The Ni(2+) site is built by His247 and His273. His321 (proton donor) is an active-site residue. Asp361 is a binding site for Ni(2+).

The protein belongs to the metallo-dependent hydrolases superfamily. Urease alpha subunit family. As to quaternary structure, heterotrimer of UreA (gamma), UreB (beta) and UreC (alpha) subunits. Three heterotrimers associate to form the active enzyme. Ni cation is required as a cofactor. Carboxylation allows a single lysine to coordinate two nickel ions.

It is found in the cytoplasm. It catalyses the reaction urea + 2 H2O + H(+) = hydrogencarbonate + 2 NH4(+). It functions in the pathway nitrogen metabolism; urea degradation; CO(2) and NH(3) from urea (urease route): step 1/1. The polypeptide is Urease subunit alpha (Burkholderia pseudomallei (strain 668)).